A 261-amino-acid polypeptide reads, in one-letter code: Putative [LysW]-aminoadipate/[LysW]-glutamate kinase (261 aa).

Substrate contacts are provided by residues 35 to 36, R62, and N162; that span reads GG.

This sequence belongs to the acetylglutamate kinase family. LysZ subfamily.

It localises to the cytoplasm. It catalyses the reaction [amino-group carrier protein]-C-terminal-N-(1,4-dicarboxybutan-1-yl)-L-glutamine + ATP = [amino-group carrier protein]-C-terminal-N-(1-carboxy-5-phosphooxy-5-oxopentan-1-yl)-L-glutamine + ADP. The catalysed reaction is [amino-group carrier protein]-C-terminal-gamma-(L-glutamyl)-L-glutamate + ATP = [amino-group carrier protein]-C-terminal-gamma-(5-phospho-L-glutamyl)-L-glutamate + ADP. It participates in amino-acid biosynthesis; L-lysine biosynthesis via AAA pathway; L-lysine from L-alpha-aminoadipate (Thermus route): step 2/5. The protein operates within amino-acid biosynthesis; L-arginine biosynthesis. Functionally, involved in both the arginine and lysine biosynthetic pathways. Phosphorylates the LysW-bound precursors glutamate (for arginine biosynthesis), respectively alpha-aminoadipate (for lysine biosynthesis). This is Putative [LysW]-aminoadipate/[LysW]-glutamate kinase from Pyrobaculum calidifontis (strain DSM 21063 / JCM 11548 / VA1).